A 9518-amino-acid chain; its full sequence is Nonribosomal peptide synthetase ungA' (9518 aa).

An adenylation 1 region spans residues 214–611 (ERARETPNAP…ARKDDQVKVR (398 aa)). The Carrier 1 domain maps to 738–814 (APRTEMEWRL…DLAEVARLEQ (77 aa)). At Ser775 the chain carries O-(pantetheine 4'-phosphoryl)serine. The interval 853–1250 (DLLPCSPLQE…EEVLRQISRE (398 aa)) is condensation 1. The segment at 1292–1695 (QRVQEQPDRP…GRKDTQVKIR (404 aa)) is adenylation 2. The Carrier 2 domain maps to 1822–1898 (LPQTELERRL…RLAHCSQTEQ (77 aa)). Ser1859 is modified (O-(pantetheine 4'-phosphoryl)serine). An epimerization 1 region spans residues 1911 to 2336 (TFALSPIQQL…QRSLEVVAKE (426 aa)). The interval 2376–2803 (EDIYPCSPVQ…DNLQIASSQD (428 aa)) is condensation 2. The tract at residues 2829-3224 (RIQQQPEAPA…NRKDNQVKIR (396 aa)) is adenylation 3. The region spanning 3352-3428 (APATASEQRL…DMAQTLKVES (77 aa)) is the Carrier 3 domain. At Ser3389 the chain carries O-(pantetheine 4'-phosphoryl)serine. Positions 3465 to 3869 (EDVLPCTPLQ…QVCKEASQYL (405 aa)) are condensation 3. Residues 3906-4307 (QQAHQRPNAS…GRRDAQVKIR (402 aa)) are adenylation 4. Positions 4436 to 4512 (TPTTITECRI…RLAACTTPVD (77 aa)) constitute a Carrier 4 domain. Position 4473 is an O-(pantetheine 4'-phosphoryl)serine (Ser4473). Residues 4527–4954 (ALSPIQQLFV…EDAAQELPSL (428 aa)) form an epimerization 2 region. The interval 4990-5411 (VEDIYPCSPI…ANLISKEDLR (422 aa)) is condensation 4. Positions 5433–5829 (SEQAQNQPDA…GRKDGQVKIR (397 aa)) are adenylation 5. One can recognise a Carrier 5 domain in the interval 5957-6033 (VASSPVELAL…QLAKNSGLQA (77 aa)). At Ser5994 the chain carries O-(pantetheine 4'-phosphoryl)serine. The epimerization 3 stretch occupies residues 6050–6470 (ELSPIQRMFF…CEHSLVMAAH (421 aa)). Positions 6512–6856 (VEDIYPCTPI…TGISVQNNAS (345 aa)) are condensation 5. Residues 6947–7338 (LRPNSSAIHA…GRKDSQVKVR (392 aa)) form an adenylation 6 region. Residues 7464-7540 (LPRTEVEMQL…GLAPSAASQA (77 aa)) enclose the Carrier 6 domain. Ser7501 carries the post-translational modification O-(pantetheine 4'-phosphoryl)serine. An epimerization 4 region spans residues 7555-7978 (ELSPIQQMFI…LQTAARELPH (424 aa)). Residues 8016–8444 (VEDIYPLTPI…QVDLAGRHDQ (429 aa)) form a condensation 6 region. Positions 8468-8867 (MQCQQRPDAT…SRKDAQVKIR (400 aa)) are adenylation 7. Residues 8995–9071 (PLTTEMEWRL…DMAHYLREGQ (77 aa)) enclose the Carrier 7 domain. Ser9032 is modified (O-(pantetheine 4'-phosphoryl)serine). The condensation 7 stretch occupies residues 9111 to 9454 (DVYPTTELQD…DNLEHDAGTS (344 aa)).

This sequence belongs to the NRP synthetase family.

The protein operates within secondary metabolite biosynthesis. Nonribosomal peptide synthetase; part of the gene cluster that mediates the biosynthesis of the unguisins, gamma-aminobutyric acid (GABA)-containing fungal cyclic heptapeptides with the amino acid sequence cyclo-(D-Ala1-D-Val2-L-Leu3-beta-MePhe4-D-Ala5-D-Trp6-GABA7) for unguisin H and cyclo-(D-Ala1-D-Ala2-L-Leu3-beta-MePhe4-D-Ala5-D-Trp6-GABA7) for unguisin I. UngA' is the main enzyme within the cluster which condenses the 7 residues using its respective 7 modules. The terminal condensation domain (Ct) is involved in cyclization with D-alanine and thereby releasing of unguisins H and I. The alanine racemase ungC' provides D-alanine, which is then accepted by the first adenylation domain of ungA', whereas the methyltransferase ungE' provides the (2R,3R)-beta-methylphenylalanine residue incorporated by the module 4. Finally, the hydrolase ungD' catalyzes the hydrolysis between the D-tryptophan and GABA residues of unguisins H and I to produce the corresponding linear peptides. This is Nonribosomal peptide synthetase ungA' from Aspergillus campestris (strain IBT 28561).